The primary structure comprises 361 residues: Phenylalanine--tRNA ligase alpha subunit (361 aa).

Residue E260 coordinates Mg(2+).

The protein belongs to the class-II aminoacyl-tRNA synthetase family. Phe-tRNA synthetase alpha subunit type 1 subfamily. In terms of assembly, tetramer of two alpha and two beta subunits. It depends on Mg(2+) as a cofactor.

The protein localises to the cytoplasm. It catalyses the reaction tRNA(Phe) + L-phenylalanine + ATP = L-phenylalanyl-tRNA(Phe) + AMP + diphosphate + H(+). This Bartonella bacilliformis (strain ATCC 35685 / KC583 / Herrer 020/F12,63) protein is Phenylalanine--tRNA ligase alpha subunit.